The chain runs to 249 residues: Putative [LysW]-aminoadipate/[LysW]-glutamate kinase (249 aa).

R64 and N166 together coordinate substrate.

The protein belongs to the acetylglutamate kinase family. LysZ subfamily.

It localises to the cytoplasm. The enzyme catalyses [amino-group carrier protein]-C-terminal-N-(1,4-dicarboxybutan-1-yl)-L-glutamine + ATP = [amino-group carrier protein]-C-terminal-N-(1-carboxy-5-phosphooxy-5-oxopentan-1-yl)-L-glutamine + ADP. The catalysed reaction is [amino-group carrier protein]-C-terminal-gamma-(L-glutamyl)-L-glutamate + ATP = [amino-group carrier protein]-C-terminal-gamma-(5-phospho-L-glutamyl)-L-glutamate + ADP. It functions in the pathway amino-acid biosynthesis; L-lysine biosynthesis via AAA pathway; L-lysine from L-alpha-aminoadipate (Thermus route): step 2/5. Its pathway is amino-acid biosynthesis; L-arginine biosynthesis. Involved in both the arginine and lysine biosynthetic pathways. Phosphorylates the LysW-bound precursors glutamate (for arginine biosynthesis), respectively alpha-aminoadipate (for lysine biosynthesis). This Pyrococcus horikoshii (strain ATCC 700860 / DSM 12428 / JCM 9974 / NBRC 100139 / OT-3) protein is Putative [LysW]-aminoadipate/[LysW]-glutamate kinase.